The sequence spans 580 residues: Laccase-5 (580 aa).

A signal peptide spans 1–25 (MDVTKSLLCFISFVAFLLFSSVAEA). 2 Plastocyanin-like domains span residues 34 to 150 (IIQA…PPAG) and 160 to 312 (RNVP…YKSA). Asn-80 is a glycosylation site (N-linked (GlcNAc...) asparagine). Cu cation contacts are provided by His-84, His-86, His-129, and His-131. N-linked (GlcNAc...) asparagine glycosylation is found at Asn-189, Asn-300, Asn-340, Asn-392, Asn-402, Asn-410, and Asn-443. Positions 428 to 564 (DFPAKPPVKF…AMAFLVENGN (137 aa)) constitute a Plastocyanin-like 3 domain. 7 residues coordinate Cu cation: His-481, His-484, His-486, His-543, Cys-544, His-545, and His-549.

This sequence belongs to the multicopper oxidase family. It depends on Cu cation as a cofactor. Ubiquitous and constitutive.

It is found in the secreted. The protein localises to the extracellular space. It localises to the apoplast. The enzyme catalyses 4 hydroquinone + O2 = 4 benzosemiquinone + 2 H2O. Its function is as follows. Lignin degradation and detoxification of lignin-derived products. This chain is Laccase-5 (LAC5), found in Arabidopsis thaliana (Mouse-ear cress).